Reading from the N-terminus, the 384-residue chain is MAPKKSKKSKKEESMIDFVEEEVTGDVDEDGFEQAEDMPDEVDSDEDEPPKKKKKVVKKEIKQELELTDEKLQELLEKYEASKATATKTKDDFKHLPKSQRGKALKRALRKDKRARQGERAQIRDELGESAPQKEVPKTIESMREYDATMVNEEDDEVEHDEANDEFAPYFNRETSPKVMITMTPKAKITTFKFCFELQKCIPNSEIFTRKNVLLKTIIEQAKEREFTDLLVVHEDRKKPNGIIFCHLPEGPTAYFKINSLTFTQDLKKFGESTSHFPEVILNNFNTRLGHNIARMLACLFPHDPKFTGRRVVTFHNQRDYIFFRHHRYEFKKEGSKAALLELGPRFTLRLKWLQKGTFDAKWGEFEWVLKRHEMETSRRRFFL.

2 disordered regions span residues 1 to 58 (MAPK…KVVK) and 82 to 135 (SKAT…PQKE). The span at 18 to 48 (FVEEEVTGDVDEDGFEQAEDMPDEVDSDEDE) shows a compositional bias: acidic residues. The segment covering 96-114 (LPKSQRGKALKRALRKDKR) has biased composition (basic residues). A compositionally biased stretch (basic and acidic residues) spans 115–127 (ARQGERAQIRDEL). Residues 177–360 (PKVMITMTPK…LKWLQKGTFD (184 aa)) enclose the Brix domain.

The sequence is that of Brix domain-containing protein F44G4.1 from Caenorhabditis elegans.